Reading from the N-terminus, the 320-residue chain is GTPase Era (320 aa).

In terms of domain architecture, Era-type G spans 25–193 (HCGFIAIVGR…RKHVRDHLPK (169 aa)). Residues 33–40 (GRPNVGKS) are G1. 33–40 (GRPNVGKS) serves as a coordination point for GTP. A G2 region spans residues 59–63 (QTTRH). Residues 80 to 83 (DTPG) form a G3 region. GTP contacts are provided by residues 80–84 (DTPGL) and 142–145 (NKVD). A G4 region spans residues 142-145 (NKVD). A G5 region spans residues 172 to 174 (ISA). The KH type-2 domain occupies 216–302 (VREKLMRFTG…YLETWVKVKS (87 aa)).

This sequence belongs to the TRAFAC class TrmE-Era-EngA-EngB-Septin-like GTPase superfamily. Era GTPase family. In terms of assembly, monomer.

The protein resides in the cytoplasm. The protein localises to the cell inner membrane. An essential GTPase that binds both GDP and GTP, with rapid nucleotide exchange. Plays a role in 16S rRNA processing and 30S ribosomal subunit biogenesis and possibly also in cell cycle regulation and energy metabolism. This Vibrio vulnificus (strain CMCP6) protein is GTPase Era.